A 218-amino-acid polypeptide reads, in one-letter code: Redox-sensing transcriptional repressor Rex (218 aa).

The segment at residues Trp25–Val64 is a DNA-binding region (H-T-H motif). Position 99–104 (Gly99–Gly104) interacts with NAD(+).

It belongs to the transcriptional regulatory Rex family. Homodimer.

It localises to the cytoplasm. Its function is as follows. Modulates transcription in response to changes in cellular NADH/NAD(+) redox state. The chain is Redox-sensing transcriptional repressor Rex from Porphyromonas gingivalis (strain ATCC BAA-308 / W83).